Here is a 361-residue protein sequence, read N- to C-terminus: Probable dual-specificity RNA methyltransferase RlmN (361 aa).

Glu99 functions as the Proton acceptor in the catalytic mechanism. The region spanning 105–342 (GPNRMTACVS…VTIRKSYGTP (238 aa)) is the Radical SAM core domain. Cys112 and Cys347 are joined by a disulfide. Residues Cys119, Cys123, and Cys126 each coordinate [4Fe-4S] cluster. S-adenosyl-L-methionine is bound by residues 171-172 (GE), Ser204, 227-229 (SLH), and Asn304. Cys347 functions as the S-methylcysteine intermediate in the catalytic mechanism.

This sequence belongs to the radical SAM superfamily. RlmN family. [4Fe-4S] cluster serves as cofactor.

It is found in the cytoplasm. The catalysed reaction is adenosine(2503) in 23S rRNA + 2 reduced [2Fe-2S]-[ferredoxin] + 2 S-adenosyl-L-methionine = 2-methyladenosine(2503) in 23S rRNA + 5'-deoxyadenosine + L-methionine + 2 oxidized [2Fe-2S]-[ferredoxin] + S-adenosyl-L-homocysteine. The enzyme catalyses adenosine(37) in tRNA + 2 reduced [2Fe-2S]-[ferredoxin] + 2 S-adenosyl-L-methionine = 2-methyladenosine(37) in tRNA + 5'-deoxyadenosine + L-methionine + 2 oxidized [2Fe-2S]-[ferredoxin] + S-adenosyl-L-homocysteine. Its function is as follows. Specifically methylates position 2 of adenine 2503 in 23S rRNA and position 2 of adenine 37 in tRNAs. The polypeptide is Probable dual-specificity RNA methyltransferase RlmN (Chlorobium luteolum (strain DSM 273 / BCRC 81028 / 2530) (Pelodictyon luteolum)).